We begin with the raw amino-acid sequence, 344 residues long: Protein RecA (344 aa).

65 to 72 (GPESSGKT) serves as a coordination point for ATP. Residues 323–337 (ELREKFQPAEAPREA) show a composition bias toward basic and acidic residues. Positions 323 to 344 (ELREKFQPAEAPREAGDDEDKE) are disordered.

It belongs to the RecA family.

The protein localises to the cytoplasm. In terms of biological role, can catalyze the hydrolysis of ATP in the presence of single-stranded DNA, the ATP-dependent uptake of single-stranded DNA by duplex DNA, and the ATP-dependent hybridization of homologous single-stranded DNAs. It interacts with LexA causing its activation and leading to its autocatalytic cleavage. The sequence is that of Protein RecA from Xanthomonas axonopodis pv. citri (strain 306).